The sequence spans 444 residues: Glutamyl-tRNA reductase (444 aa).

Substrate contacts are provided by residues 49–52 (TCNR), S109, 114–116 (ETQ), and Q120. Catalysis depends on C50, which acts as the Nucleophile. 189–194 (GAGKMG) provides a ligand contact to NADP(+).

The protein belongs to the glutamyl-tRNA reductase family. Homodimer.

It catalyses the reaction (S)-4-amino-5-oxopentanoate + tRNA(Glu) + NADP(+) = L-glutamyl-tRNA(Glu) + NADPH + H(+). It participates in porphyrin-containing compound metabolism; protoporphyrin-IX biosynthesis; 5-aminolevulinate from L-glutamyl-tRNA(Glu): step 1/2. Its function is as follows. Catalyzes the NADPH-dependent reduction of glutamyl-tRNA(Glu) to glutamate 1-semialdehyde (GSA). The protein is Glutamyl-tRNA reductase of Bacillus cereus (strain AH187).